Consider the following 400-residue polypeptide: MKIKQAMQEISRGCVEFIGEEYIRDLVERFYNTGERFCVKAGFDPTAPDLHLGHTVLLQKLATFQRYGGDVKFLIGDFTATIGDPSGKSETRKPLSAEQVKANALTYKEQVFKVLDPQYTQICFNSKWLNELGALGLITLTSHFSVARMLERDDFTKRYNNNQSISIVEFIYPLLQGYDSVALNCDIELGGNDQKFNLLVGRSLQRAYKLNKEQSVMTLPLLEGLDGVHKMSKSLNNYIGVTESANTMYAKILSINDEMMWRYYELLSSLSLQEIVMLKEQVNTGNAHPKAVKEQLALEITTRYHNIDLAKQAKIAFDNVFSKDEIPTDLAVFTCNEGEWIARVLVIAGLCESTSQARRDIRAGALKINKEKIMNEELKLSVGEYIVQIGKRRFAKVIIS.

The 'HIGH' region signature appears at 45–54 (PTAPDLHLGH). The 'KMSKS' region signature appears at 230–234 (KMSKS). Lysine 233 lines the ATP pocket. An S4 RNA-binding domain is found at 339-399 (EWIARVLVIA…GKRRFAKVII (61 aa)).

The protein belongs to the class-I aminoacyl-tRNA synthetase family. TyrS type 2 subfamily. As to quaternary structure, homodimer.

The protein localises to the cytoplasm. The enzyme catalyses tRNA(Tyr) + L-tyrosine + ATP = L-tyrosyl-tRNA(Tyr) + AMP + diphosphate + H(+). In terms of biological role, catalyzes the attachment of tyrosine to tRNA(Tyr) in a two-step reaction: tyrosine is first activated by ATP to form Tyr-AMP and then transferred to the acceptor end of tRNA(Tyr). The sequence is that of Tyrosine--tRNA ligase from Helicobacter hepaticus (strain ATCC 51449 / 3B1).